Here is a 396-residue protein sequence, read N- to C-terminus: Deoxyguanosinetriphosphate triphosphohydrolase-like protein (396 aa).

An HD domain is found at 62-198; that stretch reads RLTHSLEVAQ…AALADDIAYN (137 aa).

This sequence belongs to the dGTPase family. Type 2 subfamily.

In Jannaschia sp. (strain CCS1), this protein is Deoxyguanosinetriphosphate triphosphohydrolase-like protein.